The primary structure comprises 286 residues: NH(3)-dependent NAD(+) synthetase (286 aa).

51–58 (GISGGVDS) provides a ligand contact to ATP. D57 serves as a coordination point for Mg(2+). Position 148 (R148) interacts with deamido-NAD(+). T168 contributes to the ATP binding site. E173 is a Mg(2+) binding site. Deamido-NAD(+)-binding residues include K181 and D188. K197 and T219 together coordinate ATP. 268 to 269 (HK) serves as a coordination point for deamido-NAD(+).

The protein belongs to the NAD synthetase family. In terms of assembly, homodimer.

The enzyme catalyses deamido-NAD(+) + NH4(+) + ATP = AMP + diphosphate + NAD(+) + H(+). It functions in the pathway cofactor biosynthesis; NAD(+) biosynthesis; NAD(+) from deamido-NAD(+) (ammonia route): step 1/1. Functionally, catalyzes the ATP-dependent amidation of deamido-NAD to form NAD. Uses ammonia as a nitrogen source. The sequence is that of NH(3)-dependent NAD(+) synthetase from Paraburkholderia phytofirmans (strain DSM 17436 / LMG 22146 / PsJN) (Burkholderia phytofirmans).